The chain runs to 511 residues: UDP-N-acetylmuramoyl-L-alanyl-D-glutamate--2,6-diaminopimelate ligase (511 aa).

A UDP-N-acetyl-alpha-D-muramoyl-L-alanyl-D-glutamate-binding site is contributed by Ser-33. 118–124 provides a ligand contact to ATP; it reads GTNGKTT. Residues 160–161, Ser-187, Gln-193, and Arg-195 each bind UDP-N-acetyl-alpha-D-muramoyl-L-alanyl-D-glutamate; that span reads TT. Lys-227 carries the N6-carboxylysine modification. Meso-2,6-diaminopimelate is bound by residues Arg-403, 427-430, Gly-478, and Glu-482; that span reads DNPR. Positions 427 to 430 match the Meso-diaminopimelate recognition motif motif; it reads DNPR.

Belongs to the MurCDEF family. MurE subfamily. Mg(2+) serves as cofactor. Carboxylation is probably crucial for Mg(2+) binding and, consequently, for the gamma-phosphate positioning of ATP.

The protein resides in the cytoplasm. The enzyme catalyses UDP-N-acetyl-alpha-D-muramoyl-L-alanyl-D-glutamate + meso-2,6-diaminopimelate + ATP = UDP-N-acetyl-alpha-D-muramoyl-L-alanyl-gamma-D-glutamyl-meso-2,6-diaminopimelate + ADP + phosphate + H(+). It participates in cell wall biogenesis; peptidoglycan biosynthesis. Its function is as follows. Catalyzes the addition of meso-diaminopimelic acid to the nucleotide precursor UDP-N-acetylmuramoyl-L-alanyl-D-glutamate (UMAG) in the biosynthesis of bacterial cell-wall peptidoglycan. This chain is UDP-N-acetylmuramoyl-L-alanyl-D-glutamate--2,6-diaminopimelate ligase, found in Prochlorococcus marinus subsp. pastoris (strain CCMP1986 / NIES-2087 / MED4).